Here is a 483-residue protein sequence, read N- to C-terminus: FAD-dependent oxidoreductase oblC (483 aa).

A signal peptide spans 1–21 (MRSVTSLVSFSACLLASSVTA). N-linked (GlcNAc...) asparagine glycosylation is found at asparagine 100, asparagine 137, asparagine 190, and asparagine 240.

It belongs to the beta-cyclopiazonate dehydrogenase family. Requires FAD as cofactor.

It functions in the pathway secondary metabolite biosynthesis; terpenoid biosynthesis. Functionally, FAD-dependent oxidoreductase; part of the gene cluster that mediates the biosynthesis of the sesterterpenes ophiobolins, fungal phytotoxins with potential anti-cancer activities. The first step of the pathway is performed by the sesterterpene synthase oblA that possesses both prenyl transferase and terpene cyclase activity, converting isopentenyl diphosphate and dimethylallyl diphosphate into geranylfarnesyl diphosphate (GFPP) and further converting GFPP into ophiobolin F, respectively. Other sesterterpenoids (C(25) terpenoids) are found as minor products of oblA. The cytochrome P450 monooxygenase oblB then catalyzes a four-step oxidative transformation of ophiobolin F to yield ophiobolin C. The FAD-dependent oxidoreductase oblC might be involved in a later oxidation step that produces ophiobolin A. The chain is FAD-dependent oxidoreductase oblC from Cochliobolus heterostrophus (strain C5 / ATCC 48332 / race O) (Southern corn leaf blight fungus).